The chain runs to 113 residues: MMKKSILAFLLLTSSAAALAAPQVITVSRFEVGKDKWAFNREEVMLTCRPGNALYVINPSTLVQYPLNDIAQKEVASGKTNAQPISVIQIDDPNNPGEKMSLAPFIERAEKLC.

Positions 1–20 (MMKKSILAFLLLTSSAAALA) are cleaved as a signal peptide.

This is an uncharacterized protein from Escherichia coli (strain K12).